The primary structure comprises 252 residues: Proteasome subunit alpha 1 (252 aa).

Position 1 is an N-acetylmethionine; alternate (M1).

This sequence belongs to the peptidase T1A family. As to quaternary structure, the 20S proteasome core is composed of 14 alpha and 14 beta subunits that assemble into four stacked heptameric rings, resulting in a barrel-shaped structure. The two inner rings, each composed of seven catalytic beta subunits, are sandwiched by two outer rings, each composed of seven alpha subunits. H.volcanii produces at least 2 types of 20S proteasomes: an alpha1-beta proteasome and a proteasome containing all three subunits (alpha1, alpha2, and beta) that appears to be asymmetrical with homo-oligomeric alpha1 and alpha2 rings positioned on separate ends. The catalytic chamber with the active sites is on the inside of the barrel. Has probably a gated structure, the ends of the cylinder being occluded by the N-termini of the alpha-subunits. Is likely capped at one or both ends by the proteasome regulatory ATPase, PAN. Acetylated. The acetylated form at Met-1 was shown to be in 100-fold excess of the unacetylated form with the initiator methionine removed in whole cells and purified 20S proteasomes.

The protein localises to the cytoplasm. Its activity is regulated as follows. The formation of the proteasomal ATPase PAN-20S proteasome complex, via the docking of the C-termini of PAN into the intersubunit pockets in the alpha-rings, triggers opening of the gate for substrate entry. Interconversion between the open-gate and close-gate conformations leads to a dynamic regulation of the 20S proteasome proteolysis activity. In vitro, the chymotrypsin-like activity of the alpha1-beta proteasome is potently inhibited by carbobenzoxyl-leucinyl-leucinyl-leucinal-H (MG132) and significantly by N-acetyl-leucinyl-leucinyl-norleucinal-H (calpain inhibitor I). Component of the proteasome core, a large protease complex with broad specificity involved in protein degradation. The H.volcanii alpha1-beta proteasome is able to cleave oligopeptides after Phe, Tyr and Trp, poorly after Glu but not after Arg. Thus, displays chymotrypsin-like activity, low caspase-like activity but no trypsin-like activity. The polypeptide is Proteasome subunit alpha 1 (Haloferax volcanii (strain ATCC 29605 / DSM 3757 / JCM 8879 / NBRC 14742 / NCIMB 2012 / VKM B-1768 / DS2) (Halobacterium volcanii)).